An 80-amino-acid polypeptide reads, in one-letter code: Small ribosomal subunit protein bS18 (80 aa).

Belongs to the bacterial ribosomal protein bS18 family. In terms of assembly, part of the 30S ribosomal subunit. Forms a tight heterodimer with protein bS6.

Binds as a heterodimer with protein bS6 to the central domain of the 16S rRNA, where it helps stabilize the platform of the 30S subunit. The sequence is that of Small ribosomal subunit protein bS18 from Beijerinckia indica subsp. indica (strain ATCC 9039 / DSM 1715 / NCIMB 8712).